Reading from the N-terminus, the 584-residue chain is Optineurin (584 aa).

The interval 1 to 32 is disordered; the sequence is MSHQPLSCLTEKGDSPCETPGNGPSNMVHPSL. A coiled-coil region spans residues 38 to 180; it reads EELLQQMKEL…VSELQLKLNS (143 aa). Residues 58–219 form an interaction with Rab8 region; the sequence is MKLNNQAMKG…TPTRTDPISL (162 aa). The LIR signature appears at 186–191; it reads DSFVEI. At serine 187 the chain carries Phosphoserine. Coiled-coil stretches lie at residues 243 to 278 and 307 to 511; these read CLREGNQKVERLEVALREAKERISDFEKKANGHSST and IQVT…DIEE. A compositionally biased stretch (basic and acidic residues) spans 267–295; the sequence is DFEKKANGHSSTEKQTARRADREKEDKGQ. The disordered stretch occupies residues 267–302; the sequence is DFEKKANGHSSTEKQTARRADREKEDKGQESVGSEV. At serine 345 the chain carries Phosphoserine. Residues 414-584 form an interaction with HD region; the sequence is TKQQAEKVDK…LQIHVMDCII (171 aa). Positions 415-524 are interaction with MYO6; it reads KQQAEKVDKM…RQSLMEMQCR (110 aa). The UBAN motif lies at 477–482; sequence DFHAER. Residue serine 530 is modified to Phosphoserine. The CCHC NOA-type zinc-finger motif lies at 554 to 584; the sequence is PRSIPIHSCPKCGEVLPDIDTLQIHVMDCII. Zn(2+) is bound by residues cysteine 562, cysteine 565, histidine 578, and cysteine 582.

As to quaternary structure, self-associates. Interacts with HD, GTF3A, TRAF3, TBK1 and MYO6. Interacts (via UBAN) with ubiquitinated TFRC. Interacts with active GTP-bound Rab8 (RAB8A and/or RAB8B). Interacts with TBC1D17. Binds to linear ubiquitin chains. Interacts with LC3 family members MAP1LC3A, MAP1LC3B, GABARAP, GABARAPL1 and GABARAPL2; OPTN phosphorylation increases the association (at least with MAP1LC3B). Interacts with RAB12; the interaction may be indirect. Interacts with TBK1; this interaction leads to the Golgi localization of TBK1 and its subsequent activation. Interacts with palmitoyltransferase ZDHHC17/HIP14; the interaction does not lead to palmitoylation of OPTN. Interacts with CYLD. Interacts with TOM1; the interaction is indirect and is mediated by MYO6, which acts as a bridge between TOM1 and OPTN. Interacts with USP12; the interaction is independent of USP12 deubiquitinase activity and may be involved in regulation of autophagic flux. Phosphorylated by TBK1, leading to restrict bacterial proliferation in case of infection. In terms of tissue distribution, in eye, it is expressed in anterior segment, retina, and optic nerve blood vessels (at protein level). Highly expressed in adult liver, heart and testis.

The protein resides in the cytoplasm. Its subcellular location is the perinuclear region. It localises to the golgi apparatus. The protein localises to the trans-Golgi network. It is found in the cytoplasmic vesicle. The protein resides in the autophagosome. Its subcellular location is the recycling endosome. Its function is as follows. Plays an important role in the maintenance of the Golgi complex, in membrane trafficking, in exocytosis, through its interaction with myosin VI and Rab8. Links myosin VI to the Golgi complex and plays an important role in Golgi ribbon formation. Plays a role in the activation of innate immune response during viral infection. Mechanistically, recruits TBK1 at the Golgi apparatus, promoting its trans-phosphorylation after RLR or TLR3 stimulation. In turn, activated TBK1 phosphorylates its downstream partner IRF3 to produce IFN-beta. Plays a neuroprotective role in the eye and optic nerve. May act by regulating membrane trafficking and cellular morphogenesis via a complex that contains Rab8 and huntingtin (HD). Mediates the interaction of Rab8 with the probable GTPase-activating protein TBC1D17 during Rab8-mediated endocytic trafficking, such as that of transferrin receptor (TFRC/TfR); regulates Rab8 recruitment to tubules emanating from the endocytic recycling compartment. Autophagy receptor that interacts directly with both the cargo to become degraded and an autophagy modifier of the MAP1 LC3 family; targets ubiquitin-coated bacteria (xenophagy), such as cytoplasmic Salmonella enterica, and appears to function in the same pathway as SQSTM1 and CALCOCO2/NDP52. The sequence is that of Optineurin (Optn) from Mus musculus (Mouse).